Consider the following 234-residue polypeptide: MAKVAKRIKNIRKDVDFNQLYALNDAVSMVKERAVAKFDETIEISMNLGVDPRHADQMVRGVAHLPNGTGRNIRVAVFARGDKAEEAKAAGADIVGAEDLFESINGGVIDFDRCIATPDMMPLVGRLGKILGPRSLMPNPKVGTVTLDVAGAVKASKGGAVEFRVEKAGIVHAGIGKASFGVEKIVENIKAFASAVIKAKPQGAKGEYIKRVAVSSTMGVGVKVDPATVRSESV.

The protein belongs to the universal ribosomal protein uL1 family. Part of the 50S ribosomal subunit.

In terms of biological role, binds directly to 23S rRNA. The L1 stalk is quite mobile in the ribosome, and is involved in E site tRNA release. Protein L1 is also a translational repressor protein, it controls the translation of the L11 operon by binding to its mRNA. The chain is Large ribosomal subunit protein uL1 from Bartonella tribocorum (strain CIP 105476 / IBS 506).